Consider the following 362-residue polypeptide: uncharacterized protein (362 aa).

Disordered regions lie at residues 1-117 (MASK…GLNR), 153-172 (SSAP…GIRK), and 210-266 (RHFD…SSSN). Over residues 12–23 (AKKEKEIKKEIE) the composition is skewed to basic and acidic residues. Over residues 51–70 (ENDDTDGDGKEEDAQKEDDI) the composition is skewed to acidic residues. Low complexity-rich tracts occupy residues 100–112 (NSPP…TRNT), 153–167 (SSAP…GSPS), and 241–265 (VPPS…TSSS).

This is an uncharacterized protein from Caenorhabditis elegans.